Consider the following 517-residue polypeptide: Methylmalonyl-CoA decarboxylase subunit alpha (517 aa).

The CoA carboxyltransferase N-terminal domain maps to 4–260 (AAKKIQDLQK…NNMEKAPEFG (257 aa)). The 243-residue stretch at 271 to 513 (ELDALMPDNP…REKLPAKKHG (243 aa)) folds into the CoA carboxyltransferase C-terminal domain.

It belongs to the AccD/PCCB family. In terms of assembly, the methylmalonyl-CoA decarboxylase is composed of four subunits: the carboxyltransferase alpha subunit (MmdA), the tunnel beta subunit (MmdB), the biotin-containing gamma subunit (MmdC) and the delta subunit (MmdD).

The protein localises to the cell membrane. It catalyses the reaction (S)-methylmalonyl-CoA + Na(+)(in) + H(+)(out) = propanoyl-CoA + Na(+)(out) + CO2. Its function is as follows. Carboxyltransferase subunit of the sodium ion pump methylmalonyl-CoA decarboxylase, which converts the chemical energy of a decarboxylation reaction into an electrochemical gradient of Na(+) ions across the cytoplasmic membrane, thereby creating a sodium ion motive force that is used for ATP synthesis. The alpha subunit catalyzes the Na(+)-independent carboxyltransfer from methylmalonyl-CoA to the prosthetic biotin group located on the gamma subunit. The protein is Methylmalonyl-CoA decarboxylase subunit alpha of Propionigenium modestum.